Here is a 678-residue protein sequence, read N- to C-terminus: Pescadillo homolog (678 aa).

Positions 265–289 are disordered; the sequence is PQQQTKTNNTTKKSKSTTAAAAATT. Low complexity predominate over residues 269-289; the sequence is TKTNNTTKKSKSTTAAAAATT. The 91-residue stretch at 352–442 folds into the BRCT domain; it reads DVTTLFKGFH…LLLPYSEYTI (91 aa). Disordered stretches follow at residues 485–601 and 626–678; these read TNAE…EDTK and ATAN…KQKK. Over residues 505 to 518 the composition is skewed to acidic residues; sequence SDGESDDEDDEDLE. Residues 519–531 are compositionally biased toward basic and acidic residues; it reads HLETRYTEELRKE. The span at 541–574 shows a compositional bias: acidic residues; sequence VDDDDEEEEDGEEDGEEEEEEEDGEEESESESES. A coiled-coil region spans residues 581–640; that stretch reads VLTKKQRDELNKQKQAEEDTKLAELMIRKKDKWIYNKVKETNQQRATANQTLLEKRNKVE. Composition is skewed to basic and acidic residues over residues 585–601 and 633–643; these read KQRD…EDTK and LEKRNKVESGK. The span at 649–678 shows a compositional bias: low complexity; the sequence is VKVAPQPKKPAPLVKKSQQKQQQASKKQKK.

It belongs to the pescadillo family.

It localises to the nucleus. Its subcellular location is the nucleolus. The protein resides in the nucleoplasm. Functionally, required for maturation of ribosomal RNAs and formation of the large ribosomal subunit. This is Pescadillo homolog from Dictyostelium discoideum (Social amoeba).